We begin with the raw amino-acid sequence, 190 residues long: Ferric nitrobindin-like protein (190 aa).

The GXWXGXG motif lies at 20 to 26; that stretch reads GNWAGAG.

Belongs to the nitrobindin family.

The sequence is that of Ferric nitrobindin-like protein from Streptomyces griseus subsp. griseus (strain JCM 4626 / CBS 651.72 / NBRC 13350 / KCC S-0626 / ISP 5235).